A 212-amino-acid chain; its full sequence is ATP-dependent dethiobiotin synthetase BioD (212 aa).

Position 13–18 (13–18) interacts with ATP; that stretch reads GVGKTV. T17 serves as a coordination point for Mg(2+). K33 is an active-site residue. E100 contributes to the Mg(2+) binding site. ATP contacts are provided by residues 100–103 and 184–186; these read EGAG and PHL.

This sequence belongs to the dethiobiotin synthetase family. Homodimer. Requires Mg(2+) as cofactor.

The protein localises to the cytoplasm. The enzyme catalyses (7R,8S)-7,8-diammoniononanoate + CO2 + ATP = (4R,5S)-dethiobiotin + ADP + phosphate + 3 H(+). It functions in the pathway cofactor biosynthesis; biotin biosynthesis; biotin from 7,8-diaminononanoate: step 1/2. In terms of biological role, catalyzes a mechanistically unusual reaction, the ATP-dependent insertion of CO2 between the N7 and N8 nitrogen atoms of 7,8-diaminopelargonic acid (DAPA, also called 7,8-diammoniononanoate) to form a ureido ring. This chain is ATP-dependent dethiobiotin synthetase BioD, found in Rhodopseudomonas palustris (strain BisB5).